The sequence spans 632 residues: MPTTFQEIPRKRPSTPLLDRAVTPVGLRRLGEAELETLADELRLELLYTVGQTGGHFGAGLGVIELTIALHYVFDTPDDRLVWDVGHQAYPHKILTGRREQMGTLRQKDGIAAFPRRAESEYDTFGVGHSSTSISAALGMAIAARLQGSDRKAIAVIGDGALTAGMAFEALNHAPEVDANMLVILNDNDMSISRNVGGLSNYLAKILSSRTYASMREGSKKVLSRLPGAWEIARRTEEYAKGMLVPGTLFEELGWNYIGPIDGHDLPTLIATLRNMRDLKGPQFLHIVTKKGKGFAPAEVDPIGYHAITKLDPLNAPAAAPKKASGPKYSGVFGEWLCDMAAADPRLVGITPAMKEGSDLVAFSERFPLRYFDVAIAEQHAVTFAAGMACEGAKPVVAIYSTFLQRGYDQLVHDVAVQNLDVLFAIDRAGLVGEDGPTHAGSFDLSYLRCIPGMLVMTPSDENELRKMLSTGHLYNGPAAVRYPRGNGPNAVIEKDLEPIEIGKGIVRRQGSKTAFLVFGVQLAEALKVAEKIDATVVDMRFVKPLDEALVREIAGGHELLVTVEENAIMGGAGAAVSEFLARENILKSVLHLGLPDVYVEHAKPAQMLAECGLDEAGIEASVRERMTLLAL.

Residues H87 and 128–130 (GHS) contribute to the thiamine diphosphate site. Mg(2+) is bound at residue D159. Thiamine diphosphate-binding positions include 160-161 (GA), N188, F295, and E378. A Mg(2+)-binding site is contributed by N188.

Belongs to the transketolase family. DXPS subfamily. As to quaternary structure, homodimer. Mg(2+) is required as a cofactor. The cofactor is thiamine diphosphate.

It catalyses the reaction D-glyceraldehyde 3-phosphate + pyruvate + H(+) = 1-deoxy-D-xylulose 5-phosphate + CO2. It participates in metabolic intermediate biosynthesis; 1-deoxy-D-xylulose 5-phosphate biosynthesis; 1-deoxy-D-xylulose 5-phosphate from D-glyceraldehyde 3-phosphate and pyruvate: step 1/1. Its function is as follows. Catalyzes the acyloin condensation reaction between C atoms 2 and 3 of pyruvate and glyceraldehyde 3-phosphate to yield 1-deoxy-D-xylulose-5-phosphate (DXP). This Pseudomonas fluorescens (strain SBW25) protein is 1-deoxy-D-xylulose-5-phosphate synthase.